A 370-amino-acid polypeptide reads, in one-letter code: MLDIDVLRQQGALRLSIAFRAGKGVTALFGRSGAGKTSVISMVAGLSRPDGGRIVVDDRVLFDGAKGIDLAPEKRRVGYVFQEGRLFPHLTVRQNLAFGMNRVPAAERYVGEDDVVDLLGISALLDRRPAKLSGGEKQRVAIGRALLASPRILLMDEPLASLDAQRKDEVLPFIARLPRRFSIPILYVSHAMDEVLRLADTLVLIAEGQVAASGPLEEVLARPDIPDFAAQRDAGAVVAAKVAGRDIPFGATLLDTPAGLLRTRPIDLPLGTKVRVRIAAADISLALERPRMVSVQNILAATILAIGEPEDGRLSVDLDAGPPGGPPCRLWASITARARHDLGLVPGLRVHALIKAMSLLRDELVEHSPH.

Positions 1 to 232 (MLDIDVLRQQ…PDIPDFAAQR (232 aa)) constitute an ABC transporter domain. 30–37 (GRSGAGKT) serves as a coordination point for ATP. The region spanning 292–363 (MVSVQNILAA…IKAMSLLRDE (72 aa)) is the Mop domain.

The protein belongs to the ABC transporter superfamily. Molybdate importer (TC 3.A.1.8) family. In terms of assembly, the complex is composed of two ATP-binding proteins (ModC), two transmembrane proteins (ModB) and a solute-binding protein (ModA).

It is found in the cell inner membrane. The enzyme catalyses molybdate(out) + ATP + H2O = molybdate(in) + ADP + phosphate + H(+). Functionally, part of the ABC transporter complex ModABC involved in molybdenum import. Responsible for energy coupling to the transport system. This is Molybdenum import ATP-binding protein ModC from Rhodospirillum rubrum (strain ATCC 11170 / ATH 1.1.1 / DSM 467 / LMG 4362 / NCIMB 8255 / S1).